Reading from the N-terminus, the 119-residue chain is NAD(P)H-quinone oxidoreductase subunit M (119 aa).

Belongs to the complex I NdhM subunit family. In terms of assembly, NDH-1 can be composed of about 15 different subunits; different subcomplexes with different compositions have been identified which probably have different functions.

It is found in the cellular thylakoid membrane. It carries out the reaction a plastoquinone + NADH + (n+1) H(+)(in) = a plastoquinol + NAD(+) + n H(+)(out). The catalysed reaction is a plastoquinone + NADPH + (n+1) H(+)(in) = a plastoquinol + NADP(+) + n H(+)(out). Functionally, NDH-1 shuttles electrons from an unknown electron donor, via FMN and iron-sulfur (Fe-S) centers, to quinones in the respiratory and/or the photosynthetic chain. The immediate electron acceptor for the enzyme in this species is believed to be plastoquinone. Couples the redox reaction to proton translocation, and thus conserves the redox energy in a proton gradient. Cyanobacterial NDH-1 also plays a role in inorganic carbon-concentration. The polypeptide is NAD(P)H-quinone oxidoreductase subunit M (Picosynechococcus sp. (strain ATCC 27264 / PCC 7002 / PR-6) (Agmenellum quadruplicatum)).